We begin with the raw amino-acid sequence, 365 residues long: MASKTENSEKQKALNSVLNQIEKSFGKGSIVRLGDSARMKVETISSGALTLDLALGGGLPRGRVIEIYGPESSGKTTLALHAIAEIQKTGGIAAFVDAEHALDPTYAAALGVDIENLLVSQPDTGEMALEIVDQLVRSVAVDIVVVDSVAALVPRAEIEGDMGDSHMGLQARLMSQALRKITGNIGKSGCTVIFLNQLRQKIGIVYGNPETTTGGNALKFYASVRLDIRRTQTLKKGSDEYGIRAKVKVAKNKVAPPFRIAEFDIIFGQGISTIGCLIDLAEETGVIKRKGAWYSYNNENIGQGRDRTITYMQENPAFTEEIDKRVRAALAGGAVVSATSVVKLDDNPDTDDHDVEDIDENTDEE.

69-76 (GPESSGKT) contributes to the ATP binding site. Residues 344–365 (LDDNPDTDDHDVEDIDENTDEE) are disordered. The span at 347 to 365 (NPDTDDHDVEDIDENTDEE) shows a compositional bias: acidic residues.

The protein belongs to the RecA family.

It is found in the cytoplasm. Its function is as follows. Can catalyze the hydrolysis of ATP in the presence of single-stranded DNA, the ATP-dependent uptake of single-stranded DNA by duplex DNA, and the ATP-dependent hybridization of homologous single-stranded DNAs. It interacts with LexA causing its activation and leading to its autocatalytic cleavage. This chain is Protein RecA, found in Arthrospira platensis (Spirulina platensis).